We begin with the raw amino-acid sequence, 353 residues long: H(2)-forming methylenetetrahydromethanopterin dehydrogenase-related protein MJ1338 (353 aa).

It belongs to the HMD family.

This Methanocaldococcus jannaschii (strain ATCC 43067 / DSM 2661 / JAL-1 / JCM 10045 / NBRC 100440) (Methanococcus jannaschii) protein is H(2)-forming methylenetetrahydromethanopterin dehydrogenase-related protein MJ1338.